The chain runs to 130 residues: Small ribosomal subunit protein uS8 (130 aa).

N6-succinyllysine is present on Lys88.

It belongs to the universal ribosomal protein uS8 family. In terms of assembly, component of the 40S ribosomal subunit. Part of the small subunit (SSU) processome, composed of more than 70 proteins and the RNA chaperone small nucleolar RNA (snoRNA) U3.

The protein localises to the cytoplasm. The protein resides in the nucleus. It is found in the nucleolus. In terms of biological role, component of the small ribosomal subunit. Part of the small subunit (SSU) processome, first precursor of the small eukaryotic ribosomal subunit. During the assembly of the SSU processome in the nucleolus, many ribosome biogenesis factors, an RNA chaperone and ribosomal proteins associate with the nascent pre-rRNA and work in concert to generate RNA folding, modifications, rearrangements and cleavage as well as targeted degradation of pre-ribosomal RNA by the RNA exosome. Required for proper erythropoiesis. This is Small ribosomal subunit protein uS8 (RPS15A) from Pongo abelii (Sumatran orangutan).